A 148-amino-acid polypeptide reads, in one-letter code: SsrA-binding protein (148 aa).

It belongs to the SmpB family.

It is found in the cytoplasm. In terms of biological role, required for rescue of stalled ribosomes mediated by trans-translation. Binds to transfer-messenger RNA (tmRNA), required for stable association of tmRNA with ribosomes. tmRNA and SmpB together mimic tRNA shape, replacing the anticodon stem-loop with SmpB. tmRNA is encoded by the ssrA gene; the 2 termini fold to resemble tRNA(Ala) and it encodes a 'tag peptide', a short internal open reading frame. During trans-translation Ala-aminoacylated tmRNA acts like a tRNA, entering the A-site of stalled ribosomes, displacing the stalled mRNA. The ribosome then switches to translate the ORF on the tmRNA; the nascent peptide is terminated with the 'tag peptide' encoded by the tmRNA and targeted for degradation. The ribosome is freed to recommence translation, which seems to be the essential function of trans-translation. The sequence is that of SsrA-binding protein from Ehrlichia ruminantium (strain Gardel).